A 169-amino-acid polypeptide reads, in one-letter code: Allophycocyanin subunit beta-18 (169 aa).

Asparagine 72 is subject to N4-methylasparagine. Cysteine 82 is a (2R,3E)-phycocyanobilin binding site.

This sequence belongs to the phycobiliprotein family. In terms of assembly, heterodimer of an alpha and a beta chain. In terms of processing, contains one covalently linked bilin chromophore.

The protein resides in the plastid. Its subcellular location is the chloroplast thylakoid membrane. In terms of biological role, light-harvesting photosynthetic bile pigment-protein from the phycobiliprotein complex. Allophycocyanin has a maximum absorption at approximately 650 nanometers. In Pyropia yezoensis (Susabi-nori), this protein is Allophycocyanin subunit beta-18 (apcF).